A 509-amino-acid polypeptide reads, in one-letter code: MDTYSGQNGWADTSNASPWGDTNDTMPIDNSLSNSLSGLQLNEDINTVRANLTESIWGTERTGAPNNVETGLEAKDSLNVSTNFNELNTAILSPTSSTSNIEEQNSFTESLESWINEVRKTYNPQQLDIISIEEIPEREGLLFKHANYSVKHLIDLPNTEPPKNRTVVRRYSDFLWLQEVLLKRYPFRMIPDLPPKKIGSQNLDPVFLNKRRIGLSKFINLVMKHPKLSKDDLVLTFLTVPTDLTSWRKQVSYDTADEFTDKRISKDFVKIWKKDLAEIWNNTANCIDELIDKWTKISILVDRHEKRLQIIANERKIMNDLIHDVGNLTKSVYPIDQNPTILDINSGMTVISKHIEKTNENYNQQALDTKQKVLPKFRMYTDILRALKNVFERYKMLATNNVSMLQKHIDLNLQKLEDMKGKPDASGQEYDRIKTTIRKDRKIMYEQSNRAWLIRECILEEFTIFQETQFMITGCFQEWAKVQSTYSSLNLNEWENVTNHILEMPLSRE.

A compositionally biased stretch (polar residues) spans 1–25 (MDTYSGQNGWADTSNASPWGDTNDT). Residues 1 to 28 (MDTYSGQNGWADTSNASPWGDTNDTMPI) are disordered. A PX domain is found at 126-245 (QLDIISIEEI…TFLTVPTDLT (120 aa)). The a 1,2-diacyl-sn-glycero-3-phospho-(1D-myo-inositol-3-phosphate) site is built by Arg170, Ser172, Lys196, and Arg211.

It belongs to the sorting nexin family.

The protein localises to the cytoplasm. The protein resides in the membrane. Required for vacuolar protein sorting. The protein is Sorting nexin MVP1 (MVP1) of Candida glabrata (strain ATCC 2001 / BCRC 20586 / JCM 3761 / NBRC 0622 / NRRL Y-65 / CBS 138) (Yeast).